Reading from the N-terminus, the 337-residue chain is NADH-quinone oxidoreductase subunit H (337 aa).

Helical transmembrane passes span 13 to 33 (IIIV…IAYL), 82 to 102 (AVFI…WAVI), 115 to 135 (VGVL…IMAG), 154 to 174 (MVSY…SAGS), 187 to 207 (GVWY…SILA), 248 to 268 (ILMS…PVDI), 274 to 294 (IPGI…FLWV), and 313 to 333 (VFLP…VTFD).

Belongs to the complex I subunit 1 family. NDH-1 is composed of 14 different subunits. Subunits NuoA, H, J, K, L, M, N constitute the membrane sector of the complex.

Its subcellular location is the cell inner membrane. The catalysed reaction is a quinone + NADH + 5 H(+)(in) = a quinol + NAD(+) + 4 H(+)(out). Functionally, NDH-1 shuttles electrons from NADH, via FMN and iron-sulfur (Fe-S) centers, to quinones in the respiratory chain. The immediate electron acceptor for the enzyme in this species is believed to be ubiquinone. Couples the redox reaction to proton translocation (for every two electrons transferred, four hydrogen ions are translocated across the cytoplasmic membrane), and thus conserves the redox energy in a proton gradient. This subunit may bind ubiquinone. The protein is NADH-quinone oxidoreductase subunit H of Rhodospirillum rubrum (strain ATCC 11170 / ATH 1.1.1 / DSM 467 / LMG 4362 / NCIMB 8255 / S1).